The sequence spans 396 residues: S-adenosylmethionine synthase (396 aa).

Histidine 16 provides a ligand contact to ATP. Aspartate 18 contributes to the Mg(2+) binding site. Glutamate 44 contributes to the K(+) binding site. Positions 57 and 100 each coordinate L-methionine. Residues 100-110 (QSVDIAQGVDR) form a flexible loop region. ATP is bound by residues 165 to 167 (DAK), aspartate 240, 246 to 247 (RK), alanine 263, and lysine 267. An L-methionine-binding site is contributed by aspartate 240. Lysine 271 contributes to the L-methionine binding site.

It belongs to the AdoMet synthase family. Homotetramer; dimer of dimers. Mg(2+) is required as a cofactor. It depends on K(+) as a cofactor.

Its subcellular location is the cytoplasm. It carries out the reaction L-methionine + ATP + H2O = S-adenosyl-L-methionine + phosphate + diphosphate. Its pathway is amino-acid biosynthesis; S-adenosyl-L-methionine biosynthesis; S-adenosyl-L-methionine from L-methionine: step 1/1. Functionally, catalyzes the formation of S-adenosylmethionine (AdoMet) from methionine and ATP. The overall synthetic reaction is composed of two sequential steps, AdoMet formation and the subsequent tripolyphosphate hydrolysis which occurs prior to release of AdoMet from the enzyme. In Pseudomonas putida (strain W619), this protein is S-adenosylmethionine synthase.